The following is a 464-amino-acid chain: Asparagine--tRNA ligase (464 aa).

The protein belongs to the class-II aminoacyl-tRNA synthetase family. As to quaternary structure, homodimer.

It is found in the cytoplasm. It carries out the reaction tRNA(Asn) + L-asparagine + ATP = L-asparaginyl-tRNA(Asn) + AMP + diphosphate + H(+). The chain is Asparagine--tRNA ligase from Xanthomonas axonopodis pv. citri (strain 306).